A 213-amino-acid polypeptide reads, in one-letter code: Large ribosomal subunit protein uL1 (213 aa).

Belongs to the universal ribosomal protein uL1 family. As to quaternary structure, part of the 50S ribosomal subunit.

In terms of biological role, binds directly to 23S rRNA. Probably involved in E site tRNA release. Functionally, protein L1 is also a translational repressor protein, it controls the translation of its operon by binding to its mRNA. In Nanoarchaeum equitans (strain Kin4-M), this protein is Large ribosomal subunit protein uL1.